The following is a 92-amino-acid chain: Arrestin-C (92 aa).

This sequence belongs to the arrestin family. Homodimer; disulfide-linked in response to retinal illumination. Interacts with CXCR4; the interaction is dependent on the C-terminal phosphorylation of CXCR4 and modulates the calcium ion mobilization activity of CXCR4. Interacts with GPR84. In terms of tissue distribution, retina and pineal gland.

The protein localises to the photoreceptor inner segment. Its subcellular location is the cell projection. The protein resides in the cilium. It localises to the photoreceptor outer segment. Its function is as follows. May play a role in an as yet undefined retina-specific signal transduction. Could bind to photoactivated-phosphorylated red/green opsins. This chain is Arrestin-C (Arr3), found in Rattus norvegicus (Rat).